Here is a 476-residue protein sequence, read N- to C-terminus: Cytosolic iron-sulfur assembly component 3 (476 aa).

A2 is modified (N-acetylalanine). The [4Fe-4S] cluster site is built by C24, C71, C74, C77, C190, C246, C395, and C399.

Belongs to the NARF family. As to quaternary structure, external component of the CIA complex. In the CIA complex, interacts directly with CIAO1 and MMS19.

Its function is as follows. Component of the cytosolic iron-sulfur protein assembly (CIA) complex, a multiprotein complex that mediates the incorporation of iron-sulfur cluster into extramitochondrial Fe/S proteins. Seems to negatively regulate the level of HIF1A expression, although this effect could be indirect. This chain is Cytosolic iron-sulfur assembly component 3, found in Bos taurus (Bovine).